The following is a 445-amino-acid chain: ATP-dependent protease ATPase subunit HslU (445 aa).

ATP is bound by residues Val18, 60–65, Asp254, Glu319, and Arg391; that span reads GVGKTE.

It belongs to the ClpX chaperone family. HslU subfamily. A double ring-shaped homohexamer of HslV is capped on each side by a ring-shaped HslU homohexamer. The assembly of the HslU/HslV complex is dependent on binding of ATP.

It localises to the cytoplasm. In terms of biological role, ATPase subunit of a proteasome-like degradation complex; this subunit has chaperone activity. The binding of ATP and its subsequent hydrolysis by HslU are essential for unfolding of protein substrates subsequently hydrolyzed by HslV. HslU recognizes the N-terminal part of its protein substrates and unfolds these before they are guided to HslV for hydrolysis. This Alcanivorax borkumensis (strain ATCC 700651 / DSM 11573 / NCIMB 13689 / SK2) protein is ATP-dependent protease ATPase subunit HslU.